We begin with the raw amino-acid sequence, 125 residues long: UPF0102 protein PA4424 (125 aa).

It belongs to the UPF0102 family.

In Pseudomonas aeruginosa (strain ATCC 15692 / DSM 22644 / CIP 104116 / JCM 14847 / LMG 12228 / 1C / PRS 101 / PAO1), this protein is UPF0102 protein PA4424.